The following is a 106-amino-acid chain: MNDSEFHRLADGLWMTIEERLDAWDGDSDIDCEINGGVLTLSFENGSKIIINRQEPLHQVWLATKQGGYHFDYKNDEWICDRSGERFWDLLETAATQQAGEAVSFR.

The protein belongs to the frataxin family.

Its function is as follows. Involved in iron-sulfur (Fe-S) cluster assembly. May act as a regulator of Fe-S biogenesis. The polypeptide is Iron-sulfur cluster assembly protein CyaY (Cronobacter sakazakii (strain ATCC BAA-894) (Enterobacter sakazakii)).